A 154-amino-acid chain; its full sequence is Myoglobin (154 aa).

Positions 2 to 148 constitute a Globin domain; that stretch reads GLSDGEWQLV…FRNDMAAQYK (147 aa). At Ser-4 the chain carries Phosphoserine. Nitrite is bound at residue His-65. His-65 contacts O2. Residue Thr-68 is modified to Phosphothreonine. Position 94 (His-94) interacts with heme b.

In terms of assembly, monomer.

It is found in the cytoplasm. The protein localises to the sarcoplasm. It catalyses the reaction Fe(III)-heme b-[protein] + nitric oxide + H2O = Fe(II)-heme b-[protein] + nitrite + 2 H(+). The catalysed reaction is H2O2 + AH2 = A + 2 H2O. Its function is as follows. Monomeric heme protein which primary function is to store oxygen and facilitate its diffusion within muscle tissues. Reversibly binds oxygen through a pentacoordinated heme iron and enables its timely and efficient release as needed during periods of heightened demand. Depending on the oxidative conditions of tissues and cells, and in addition to its ability to bind oxygen, it also has a nitrite reductase activity whereby it regulates the production of bioactive nitric oxide. Under stress conditions, like hypoxia and anoxia, it also protects cells against reactive oxygen species thanks to its pseudoperoxidase activity. The protein is Myoglobin of Rangifer tarandus (Reindeer).